Here is an 86-residue protein sequence, read N- to C-terminus: MSIYHDEVEIEDFEYDEEEEMYYYPCPCGDRFQISKEELIEGEEVATCPSCSLVIKVIYDPEMFKAEEDEESALNEKLGDLKLEKN.

Positions 4 to 60 (YHDEVEIEDFEYDEEEEMYYYPCPCGDRFQISKEELIEGEEVATCPSCSLVIKVIYD) constitute a DPH-type MB domain. Cys26, Cys28, Cys48, and Cys51 together coordinate Fe cation.

This sequence belongs to the DPH3 family. Component of the 2-(3-amino-3-carboxypropyl)histidine synthase complex composed of Dph1, Dph2, Dph3 and a NADH-dependent reductase. Fe(2+) serves as cofactor.

It catalyses the reaction [3Fe-4S](1+)-[protein] + Fe(2+)-[Dph3] = [3Fe-4S](0)-[protein] + Fe(3+)-[Dph3]. The enzyme catalyses 2 [3Fe-4S](0)-[protein] + 2 Fe(2+)-[Dph3] + NADH = 2 [4Fe-4S](1+)-[protein] + 2 [Dph3] + NAD(+) + H(+). It participates in protein modification; peptidyl-diphthamide biosynthesis. Functionally, required for the first step of diphthamide biosynthesis, a post-translational modification of histidine which occurs in elongation factor 2. Dph1 and Dph2 transfer a 3-amino-3-carboxypropyl (ACP) group from S-adenosyl-L-methionine (SAM) to a histidine residue, the reaction is assisted by a reduction system comprising Dph3 and a NADH-dependent reductase. Acts as an electron donor to reduce the Fe-S cluster in Dph1-Dph2 keeping the [4Fe-4S] clusters in the active and reduced state. Restores iron to Dph1-Dph2 iron-sulfur clusters which have degraded from [4Fe-4S] to [3Fe-4S] by donating an iron atom to reform [4Fe-4S] clusters, in a manner dependent on the presence of elongation factor 2 and SAM. Associates with the elongator complex and is required for tRNA Wobble base modifications mediated by the elongator complex. The elongator complex is required for multiple tRNA modifications, including mcm5U (5-methoxycarbonylmethyl uridine), mcm5s 2U (5-methoxycarbonylmethyl-2-thiouridine), and ncm5U (5-carbamoylmethyl uridine). The chain is Diphthamide biosynthesis protein 3 from Drosophila melanogaster (Fruit fly).